A 90-amino-acid polypeptide reads, in one-letter code: Small ribosomal subunit protein bS16 (90 aa).

This sequence belongs to the bacterial ribosomal protein bS16 family.

This is Small ribosomal subunit protein bS16 from Bacillus velezensis (strain DSM 23117 / BGSC 10A6 / LMG 26770 / FZB42) (Bacillus amyloliquefaciens subsp. plantarum).